A 232-amino-acid polypeptide reads, in one-letter code: N-(5'-phosphoribosyl)anthranilate isomerase (232 aa).

The protein belongs to the TrpF family.

The catalysed reaction is N-(5-phospho-beta-D-ribosyl)anthranilate = 1-(2-carboxyphenylamino)-1-deoxy-D-ribulose 5-phosphate. It participates in amino-acid biosynthesis; L-tryptophan biosynthesis; L-tryptophan from chorismate: step 3/5. This Wickerhamomyces anomalus (Yeast) protein is N-(5'-phosphoribosyl)anthranilate isomerase (TRP1).